Here is a 364-residue protein sequence, read N- to C-terminus: Autophagy-related protein 5 (364 aa).

Polar residues predominate over residues 1-13 (MASPNPYSYSPQL). The segment at 1–103 (MASPNPYSYS…SLPPKPKPSS (103 aa)) is disordered. Residues 28–42 (SSPSFRSTPFRSSRG) are compositionally biased toward low complexity. The segment covering 43 to 53 (TGAGTGIGLGL) has biased composition (gly residues). Residues 72 to 82 (RSGDGSHDDLP) show a composition bias toward basic and acidic residues. Residue lysine 202 forms a Glycyl lysine isopeptide (Lys-Gly) (interchain with G-Cter in ATG12) linkage. The tract at residues 262 to 306 (PSSPSPPSSDQQQPQRPGGSSSSGSYRVMQTLVPPRGPNNRTPQT) is disordered. The segment covering 269–286 (SSDQQQPQRPGGSSSSGS) has biased composition (low complexity).

Belongs to the ATG5 family. Conjugated with atg12. Conjugated to atg12; which is essential for autophagy.

The protein localises to the preautophagosomal structure membrane. Involved in cytoplasm to vacuole transport (Cvt) and autophagic vesicle formation. Autophagy is essential for maintenance of amino acid levels and protein synthesis under nitrogen starvation. Required for selective autophagic degradation of the nucleus (nucleophagy). Also required for mitophagy, which eliminates defective or superfluous mitochondria in order to fulfill cellular energy requirements and prevent excess ROS production. Conjugation with atg12, through a ubiquitin-like conjugating system involving apg-5/atg7 as an E1-like activating enzyme and atg10 as an E2-like conjugating enzyme, is essential for its function. The atg12-apg-4/atg5 conjugate acts as an E3-like enzyme which is required for lipidation of apg-6/atg8 and apg-6/atg8 association to the vesicle membranes. This chain is Autophagy-related protein 5 (apg-4), found in Neurospora crassa (strain ATCC 24698 / 74-OR23-1A / CBS 708.71 / DSM 1257 / FGSC 987).